Here is a 230-residue protein sequence, read N- to C-terminus: Ion-translocating oxidoreductase complex subunit E (230 aa).

Helical transmembrane passes span 18-38, 39-59, 63-83, 86-106, 125-145, and 182-202; these read ALVQ…ATNA, LGLG…VSAL, TPAE…VSAV, LINA…PLIV, WLSA…MFVL, and PFLL…MLAV.

The protein belongs to the NqrDE/RnfAE family. In terms of assembly, the complex is composed of six subunits: RsxA, RsxB, RsxC, RsxD, RsxE and RsxG.

It localises to the cell inner membrane. Its function is as follows. Part of a membrane-bound complex that couples electron transfer with translocation of ions across the membrane. Required to maintain the reduced state of SoxR. This chain is Ion-translocating oxidoreductase complex subunit E, found in Salmonella newport (strain SL254).